The primary structure comprises 779 residues: Phosphoribosylformylglycinamidine synthase subunit PurL (779 aa).

H52 is an active-site residue. ATP is bound by residues Y55 and K94. E96 serves as a coordination point for Mg(2+). Substrate is bound by residues 97–100 (SHNH) and R119. H98 serves as the catalytic Proton acceptor. D120 serves as a coordination point for Mg(2+). Q243 provides a ligand contact to substrate. D271 is a Mg(2+) binding site. Residue 315 to 317 (ESQ) participates in substrate binding. Positions 523 and 560 each coordinate ATP. Position 561 (N561) interacts with Mg(2+). S563 contacts substrate.

The protein belongs to the FGAMS family. As to quaternary structure, monomer. Part of the FGAM synthase complex composed of 1 PurL, 1 PurQ and 2 PurS subunits.

The protein localises to the cytoplasm. It carries out the reaction N(2)-formyl-N(1)-(5-phospho-beta-D-ribosyl)glycinamide + L-glutamine + ATP + H2O = 2-formamido-N(1)-(5-O-phospho-beta-D-ribosyl)acetamidine + L-glutamate + ADP + phosphate + H(+). Its pathway is purine metabolism; IMP biosynthesis via de novo pathway; 5-amino-1-(5-phospho-D-ribosyl)imidazole from N(2)-formyl-N(1)-(5-phospho-D-ribosyl)glycinamide: step 1/2. In terms of biological role, part of the phosphoribosylformylglycinamidine synthase complex involved in the purines biosynthetic pathway. Catalyzes the ATP-dependent conversion of formylglycinamide ribonucleotide (FGAR) and glutamine to yield formylglycinamidine ribonucleotide (FGAM) and glutamate. The FGAM synthase complex is composed of three subunits. PurQ produces an ammonia molecule by converting glutamine to glutamate. PurL transfers the ammonia molecule to FGAR to form FGAM in an ATP-dependent manner. PurS interacts with PurQ and PurL and is thought to assist in the transfer of the ammonia molecule from PurQ to PurL. In Prochlorococcus marinus (strain MIT 9215), this protein is Phosphoribosylformylglycinamidine synthase subunit PurL.